We begin with the raw amino-acid sequence, 303 residues long: UDP-3-O-acyl-N-acetylglucosamine deacetylase (303 aa).

Positions 78, 237, and 241 each coordinate Zn(2+). Histidine 264 (proton donor) is an active-site residue.

It belongs to the LpxC family. The cofactor is Zn(2+).

It catalyses the reaction a UDP-3-O-[(3R)-3-hydroxyacyl]-N-acetyl-alpha-D-glucosamine + H2O = a UDP-3-O-[(3R)-3-hydroxyacyl]-alpha-D-glucosamine + acetate. It participates in glycolipid biosynthesis; lipid IV(A) biosynthesis; lipid IV(A) from (3R)-3-hydroxytetradecanoyl-[acyl-carrier-protein] and UDP-N-acetyl-alpha-D-glucosamine: step 2/6. Catalyzes the hydrolysis of UDP-3-O-myristoyl-N-acetylglucosamine to form UDP-3-O-myristoylglucosamine and acetate, the committed step in lipid A biosynthesis. The sequence is that of UDP-3-O-acyl-N-acetylglucosamine deacetylase from Pseudomonas fluorescens (strain SBW25).